Reading from the N-terminus, the 130-residue chain is Protein ApaG (130 aa).

The 125-residue stretch at 3-127 (KAETRGISVT…FSLDSPHVRR (125 aa)) folds into the ApaG domain.

This chain is Protein ApaG, found in Methylobacterium radiotolerans (strain ATCC 27329 / DSM 1819 / JCM 2831 / NBRC 15690 / NCIMB 10815 / 0-1).